A 294-amino-acid chain; its full sequence is Acetylglutamate kinase (294 aa).

Residues 69–70 (GG), R91, and N190 contribute to the substrate site.

Belongs to the acetylglutamate kinase family. ArgB subfamily.

Its subcellular location is the cytoplasm. The catalysed reaction is N-acetyl-L-glutamate + ATP = N-acetyl-L-glutamyl 5-phosphate + ADP. It participates in amino-acid biosynthesis; L-arginine biosynthesis; N(2)-acetyl-L-ornithine from L-glutamate: step 2/4. Its function is as follows. Catalyzes the ATP-dependent phosphorylation of N-acetyl-L-glutamate. This is Acetylglutamate kinase from Mycobacterium bovis (strain ATCC BAA-935 / AF2122/97).